Reading from the N-terminus, the 191-residue chain is ATP-dependent dethiobiotin synthetase BioD 2 (191 aa).

Residue 13-18 participates in ATP binding; it reads DVGKTI. Threonine 17 is a Mg(2+) binding site. The active site involves lysine 38. Residue threonine 42 coordinates substrate. ATP contacts are provided by residues aspartate 50 and 115 to 118; that span reads EGAG. Aspartate 50 and glutamate 115 together coordinate Mg(2+).

The protein belongs to the dethiobiotin synthetase family. Homodimer. Requires Mg(2+) as cofactor.

It is found in the cytoplasm. It catalyses the reaction (7R,8S)-7,8-diammoniononanoate + CO2 + ATP = (4R,5S)-dethiobiotin + ADP + phosphate + 3 H(+). Its pathway is cofactor biosynthesis; biotin biosynthesis; biotin from 7,8-diaminononanoate: step 1/2. Its function is as follows. Catalyzes a mechanistically unusual reaction, the ATP-dependent insertion of CO2 between the N7 and N8 nitrogen atoms of 7,8-diaminopelargonic acid (DAPA, also called 7,8-diammoniononanoate) to form a ureido ring. The chain is ATP-dependent dethiobiotin synthetase BioD 2 from Haemophilus influenzae (strain ATCC 51907 / DSM 11121 / KW20 / Rd).